Consider the following 304-residue polypeptide: Aspartate carbamoyltransferase catalytic subunit (304 aa).

Arg-49 and Thr-50 together coordinate carbamoyl phosphate. L-aspartate is bound at residue Lys-77. Positions 99, 127, and 130 each coordinate carbamoyl phosphate. L-aspartate is bound by residues Arg-160 and Arg-211. The carbamoyl phosphate site is built by Ala-252 and Pro-253.

The protein belongs to the aspartate/ornithine carbamoyltransferase superfamily. ATCase family. Heterododecamer (2C3:3R2) of six catalytic PyrB chains organized as two trimers (C3), and six regulatory PyrI chains organized as three dimers (R2).

It catalyses the reaction carbamoyl phosphate + L-aspartate = N-carbamoyl-L-aspartate + phosphate + H(+). The protein operates within pyrimidine metabolism; UMP biosynthesis via de novo pathway; (S)-dihydroorotate from bicarbonate: step 2/3. Its function is as follows. Catalyzes the condensation of carbamoyl phosphate and aspartate to form carbamoyl aspartate and inorganic phosphate, the committed step in the de novo pyrimidine nucleotide biosynthesis pathway. The polypeptide is Aspartate carbamoyltransferase catalytic subunit (Bacillus cereus (strain ZK / E33L)).